Reading from the N-terminus, the 443-residue chain is GPI mannosyltransferase 1 (443 aa).

11 consecutive transmembrane segments (helical) span residues 8 to 28 (PFMV…YGAW), 68 to 88 (PLLA…FSFG), 90 to 110 (ALFA…LTLT), 136 to 156 (TRGS…WAVL), 160 to 180 (IYLG…PFIY), 232 to 252 (LTLI…LHYG), 273 to 291 (FSPY…AGAV), 302 to 322 (FESL…PLVL), 347 to 367 (SQYF…SSLL), 374 to 394 (IAVA…GYLL), and 406 to 426 (LFLA…VIVA).

This sequence belongs to the PIGM family.

Its subcellular location is the endoplasmic reticulum membrane. It participates in glycolipid biosynthesis; glycosylphosphatidylinositol-anchor biosynthesis. Functionally, mannosyltransferase involved in glycosylphosphatidylinositol-anchor biosynthesis. Transfers the first alpha-1,4-mannose to GlcN-acyl-PI during GPI precursor assembly. Required for cell wall integrity. This chain is GPI mannosyltransferase 1 (gpi14), found in Emericella nidulans (strain FGSC A4 / ATCC 38163 / CBS 112.46 / NRRL 194 / M139) (Aspergillus nidulans).